Here is a 346-residue protein sequence, read N- to C-terminus: N-acetyl-gamma-glutamyl-phosphate reductase (346 aa).

The active site involves Cys-149.

Belongs to the NAGSA dehydrogenase family. Type 1 subfamily.

It localises to the cytoplasm. The catalysed reaction is N-acetyl-L-glutamate 5-semialdehyde + phosphate + NADP(+) = N-acetyl-L-glutamyl 5-phosphate + NADPH + H(+). It functions in the pathway amino-acid biosynthesis; L-arginine biosynthesis; N(2)-acetyl-L-ornithine from L-glutamate: step 3/4. Its function is as follows. Catalyzes the NADPH-dependent reduction of N-acetyl-5-glutamyl phosphate to yield N-acetyl-L-glutamate 5-semialdehyde. The sequence is that of N-acetyl-gamma-glutamyl-phosphate reductase from Citrifermentans bemidjiense (strain ATCC BAA-1014 / DSM 16622 / JCM 12645 / Bem) (Geobacter bemidjiensis).